Reading from the N-terminus, the 455-residue chain is Bifunctional protein GlmU (455 aa).

The tract at residues Met1–Arg226 is pyrophosphorylase. Residues Leu8–Gly11, Lys22, Gln73, Gly78–Thr79, Tyr99–Asp101, Gly136, Glu151, Asn166, and Asn224 contribute to the UDP-N-acetyl-alpha-D-glucosamine site. Mg(2+) is bound at residue Asp101. Mg(2+) is bound at residue Asn224. The tract at residues Arg227–Gln247 is linker. Positions Gly248–Ser455 are N-acetyltransferase. UDP-N-acetyl-alpha-D-glucosamine is bound by residues Arg330 and Lys348. His360 acts as the Proton acceptor in catalysis. The UDP-N-acetyl-alpha-D-glucosamine site is built by Tyr363 and Asn374. Acetyl-CoA is bound by residues Ala377, Asn383 to Tyr384, Ser402, Ala420, and Arg437.

In the N-terminal section; belongs to the N-acetylglucosamine-1-phosphate uridyltransferase family. The protein in the C-terminal section; belongs to the transferase hexapeptide repeat family. In terms of assembly, homotrimer. It depends on Mg(2+) as a cofactor.

The protein resides in the cytoplasm. It carries out the reaction alpha-D-glucosamine 1-phosphate + acetyl-CoA = N-acetyl-alpha-D-glucosamine 1-phosphate + CoA + H(+). The enzyme catalyses N-acetyl-alpha-D-glucosamine 1-phosphate + UTP + H(+) = UDP-N-acetyl-alpha-D-glucosamine + diphosphate. Its pathway is nucleotide-sugar biosynthesis; UDP-N-acetyl-alpha-D-glucosamine biosynthesis; N-acetyl-alpha-D-glucosamine 1-phosphate from alpha-D-glucosamine 6-phosphate (route II): step 2/2. The protein operates within nucleotide-sugar biosynthesis; UDP-N-acetyl-alpha-D-glucosamine biosynthesis; UDP-N-acetyl-alpha-D-glucosamine from N-acetyl-alpha-D-glucosamine 1-phosphate: step 1/1. It functions in the pathway bacterial outer membrane biogenesis; LPS lipid A biosynthesis. In terms of biological role, catalyzes the last two sequential reactions in the de novo biosynthetic pathway for UDP-N-acetylglucosamine (UDP-GlcNAc). The C-terminal domain catalyzes the transfer of acetyl group from acetyl coenzyme A to glucosamine-1-phosphate (GlcN-1-P) to produce N-acetylglucosamine-1-phosphate (GlcNAc-1-P), which is converted into UDP-GlcNAc by the transfer of uridine 5-monophosphate (from uridine 5-triphosphate), a reaction catalyzed by the N-terminal domain. The protein is Bifunctional protein GlmU of Pseudomonas putida (strain GB-1).